Reading from the N-terminus, the 319-residue chain is MSLNYLDFELPIAELEVKIEELQNVSRAGELDLELEEEVSKLKEKSDRLKEKIFSELGAWQVSQLARHPLRPYTRDYIERIFTEFDEFAGDRTFANDPAILGGIARLDGEPVMVIGQQKGRGTAEKIKRNFGMPKPEGYRKALRLMEMAERFKMPIMTFIDTPGAYPGVGAEERGQSEAIARNLKVMASLKVPTICTVIGEGGSGGALAIGVGDRVNMLQYSTYSVISPEGCASILWKSADKAPLAAEAMGVTAKRVKELDLINNLVDEPLGGAHRNYDAMARNLKVRLKRDLADLQALSLEEMLDQRYKRLMSFGYCS.

In terms of domain architecture, CoA carboxyltransferase C-terminal spans 34-295; that stretch reads ELEEEVSKLK…KVRLKRDLAD (262 aa).

The protein belongs to the AccA family. In terms of assembly, acetyl-CoA carboxylase is a heterohexamer composed of biotin carboxyl carrier protein (AccB), biotin carboxylase (AccC) and two subunits each of ACCase subunit alpha (AccA) and ACCase subunit beta (AccD).

The protein localises to the cytoplasm. It carries out the reaction N(6)-carboxybiotinyl-L-lysyl-[protein] + acetyl-CoA = N(6)-biotinyl-L-lysyl-[protein] + malonyl-CoA. Its pathway is lipid metabolism; malonyl-CoA biosynthesis; malonyl-CoA from acetyl-CoA: step 1/1. Its function is as follows. Component of the acetyl coenzyme A carboxylase (ACC) complex. First, biotin carboxylase catalyzes the carboxylation of biotin on its carrier protein (BCCP) and then the CO(2) group is transferred by the carboxyltransferase to acetyl-CoA to form malonyl-CoA. In Pseudoalteromonas translucida (strain TAC 125), this protein is Acetyl-coenzyme A carboxylase carboxyl transferase subunit alpha.